The chain runs to 347 residues: Ferredoxin--NADP reductase 1 (347 aa).

Residues threonine 26, aspartate 45, glutamine 53, tyrosine 58, valine 98, phenylalanine 133, aspartate 298, and serine 339 each contribute to the FAD site.

This sequence belongs to the ferredoxin--NADP reductase type 2 family. In terms of assembly, homodimer. The cofactor is FAD.

It catalyses the reaction 2 reduced [2Fe-2S]-[ferredoxin] + NADP(+) + H(+) = 2 oxidized [2Fe-2S]-[ferredoxin] + NADPH. The chain is Ferredoxin--NADP reductase 1 from Chloroherpeton thalassium (strain ATCC 35110 / GB-78).